Reading from the N-terminus, the 556-residue chain is Single-strand DNA-binding protein (556 aa).

Disordered stretches follow at residues 1–95 (MDPK…SEVE) and 527–556 (FVRPEPALPPISDSRRTYESRPRGPTVNSL). Composition is skewed to polar residues over residues 10-25 (ENITETAAGNVETSDF) and 36-51 (VNSTGMSEIDMTGSQE). Composition is skewed to basic and acidic residues over residues 52 to 73 (TPEHNMHGSPTHTDDLGPRLDA) and 539 to 548 (DSRRTYESRP).

Interacts with host VIP2 that promotes T-DNA integration into the host genome. Forms a complex made of virE2 and host proteins VIP1 and VBF. Forms heterodimers with the chaperone protein virE1 that prevent virE2 anarchic homopolymerization. Interacts with A.thaliana VIP1 that mediates its translocation to the host nucleus. Forms a complex made of VirE2, host VIP1 and VIP2 and single-stranded DNA (ssDNA).

It localises to the secreted. Its subcellular location is the host nucleus. Its function is as follows. Involved in DNA transformation; mediates the nuclear uptake of single-stranded DNA copies of the transferred DNA (T-DNA) element. Binds single-stranded but not double-stranded DNA regardless of nucleotide sequence composition. In Agrobacterium fabrum (strain C58 / ATCC 33970) (Agrobacterium tumefaciens (strain C58)), this protein is Single-strand DNA-binding protein (virE2).